The chain runs to 424 residues: Probable serine/threonine-protein kinase PBL15 (424 aa).

A Protein kinase domain is found at 99-380; it reads FSGNYLLGEG…AVVEALESLI (282 aa). ATP-binding positions include 105-113 and Lys-134; that span reads LGEGGFGKV. The residue at position 179 (Tyr-179) is a Phosphotyrosine. The Proton acceptor role is filled by Asp-229. Phosphoserine is present on Ser-233. 2 positions are modified to phosphothreonine: Thr-264 and Thr-269. Tyr-277 bears the Phosphotyrosine mark. The segment at 390-424 is disordered; the sequence is GHWPLSPKSQGGKVSPKVRGDHRSGRKSAPGSLRS.

This sequence belongs to the protein kinase superfamily. Ser/Thr protein kinase family. As to quaternary structure, interacts with the Xanthomonas campestris effector XopAC/AvrAC.

The protein resides in the cell membrane. The catalysed reaction is L-seryl-[protein] + ATP = O-phospho-L-seryl-[protein] + ADP + H(+). It catalyses the reaction L-threonyl-[protein] + ATP = O-phospho-L-threonyl-[protein] + ADP + H(+). Functionally, may be involved in plant defense signaling. The polypeptide is Probable serine/threonine-protein kinase PBL15 (Arabidopsis thaliana (Mouse-ear cress)).